The chain runs to 207 residues: Protein 6b (207 aa).

Residues 160-183 (GNYTEEGEDDDDEMDDEGEAGGAE) form a disordered region. Acidic residues predominate over residues 164–178 (EEGEDDDDEMDDEGE).

Involved in tumor formation and increases auxin and cytokinin effects in host plants. The chain is Protein 6b (6b) from Agrobacterium tumefaciens (strain Ach5).